The following is a 340-amino-acid chain: tRNA-cytidine(32) 2-sulfurtransferase (340 aa).

Positions 74–79 (SGGKDS) match the PP-loop motif motif. Positions 149, 152, and 240 each coordinate [4Fe-4S] cluster.

Belongs to the TtcA family. Homodimer. It depends on Mg(2+) as a cofactor. [4Fe-4S] cluster serves as cofactor.

It is found in the cytoplasm. It catalyses the reaction cytidine(32) in tRNA + S-sulfanyl-L-cysteinyl-[cysteine desulfurase] + AH2 + ATP = 2-thiocytidine(32) in tRNA + L-cysteinyl-[cysteine desulfurase] + A + AMP + diphosphate + H(+). It participates in tRNA modification. Functionally, catalyzes the ATP-dependent 2-thiolation of cytidine in position 32 of tRNA, to form 2-thiocytidine (s(2)C32). The sulfur atoms are provided by the cysteine/cysteine desulfurase (IscS) system. This is tRNA-cytidine(32) 2-sulfurtransferase from Burkholderia ambifaria (strain MC40-6).